A 604-amino-acid polypeptide reads, in one-letter code: MTIGSKFSLLAGTRKTDGPTEISASSPPDVETPSAEKTATASAGNKEVGINDNSSDEALPSQHVQTGVQKIQAVTLVWSKWSLVAVFCLLWLVTLANGFRQSILYSLTPYATSSFQSHSLLTVINIVSSAMVSALYIPVAKVVDVWGRAEGWLVMVGLSTLGLIMMAASKNLETYCAADVFYSVGFAGMNYILCVLAADITNLRNRGIAFAFTSSPYMITAFAGSKAAEKFLVNVNWRWGFGAFAIIFPFVASPVYFVLKVGLNRAEKQGIIQPRLRSGRTLSQNFKYYFFAFDIPGVILLAGGLTVFLLPFTLATRAPNGWKSDYIIAMIVTGFVVMVLFVLYQAYWAPQPFLKYEFLTNRTVLGACLIDATYQMSYYCWNSYFNSFLQVVCNLPVAEAGYVGSTFQVVSGVLLFMVGFAIRKTGYFRWLLFIGVPLYIFAQGLMIHFRQPNQYIGYIVMCEIFISIGGSIFVLLQQLAVLVAVDHQYVAAALAVLFISGGIGGAVGNAISGAIWTNTFLPALMRNLPESAKANAVAIYGDLRVQLSYPVNSPERIAIQESYGYAQARMLAAGTGLMALMFIWMFMVKNYNVKNMSQTKGMVF.

Residues 1 to 61 form a disordered region; it reads MTIGSKFSLL…DNSSDEALPS (61 aa). A run of 14 helical transmembrane segments spans residues 73-95, 115-137, 149-168, 178-200, 207-224, 237-259, 289-311, 326-343, 363-385, 400-422, 427-449, 454-476, 489-511, and 566-588; these read AVTL…LVTL, FQSH…ALYI, AEGW…MMAA, ADVF…AADI, GIAF…AFAG, WRWG…YFVL, YFFA…FLLP, YIIA…LFVL, TVLG…NSYF, AGYV…GFAI, YFRW…MIHF, QYIG…FVLL, YVAA…GNAI, and AQAR…MFMV.

Belongs to the major facilitator superfamily.

It localises to the membrane. Involved in the transport of siderophore triacestylfusarinine C and so has a role in iron homeostasis. The chain is Siderophore iron transporter mirB (mirB) from Emericella nidulans (strain FGSC A4 / ATCC 38163 / CBS 112.46 / NRRL 194 / M139) (Aspergillus nidulans).